A 343-amino-acid polypeptide reads, in one-letter code: UDP-3-O-acylglucosamine N-acyltransferase (343 aa).

Residue His245 is the Proton acceptor of the active site.

It belongs to the transferase hexapeptide repeat family. LpxD subfamily. Homotrimer.

The catalysed reaction is a UDP-3-O-[(3R)-3-hydroxyacyl]-alpha-D-glucosamine + a (3R)-hydroxyacyl-[ACP] = a UDP-2-N,3-O-bis[(3R)-3-hydroxyacyl]-alpha-D-glucosamine + holo-[ACP] + H(+). It participates in bacterial outer membrane biogenesis; LPS lipid A biosynthesis. Its function is as follows. Catalyzes the N-acylation of UDP-3-O-acylglucosamine using 3-hydroxyacyl-ACP as the acyl donor. Is involved in the biosynthesis of lipid A, a phosphorylated glycolipid that anchors the lipopolysaccharide to the outer membrane of the cell. The polypeptide is UDP-3-O-acylglucosamine N-acyltransferase (Phenylobacterium zucineum (strain HLK1)).